The sequence spans 1092 residues: Fibrinogen-binding protein (1092 aa).

Residues 1–51 form the signal peptide; the sequence is MINKKNNLLTKKKPIANKSNKYAIRKFTVGTASIVIGATLLFGLGHNEAKA. A compositionally biased stretch (basic and acidic residues) spans 50–63; it reads KAEENSVQDVKDSN. Residues 50-236 are disordered; it reads KAEENSVQDV…GYTNIDEKIS (187 aa). The segment at 52-599 is ligand binding A region; it reads EENSVQDVKD…GQGQGDLPPE (548 aa). Residues 64-76 are compositionally biased toward acidic residues; that stretch reads TDDELSDSNDQSS. The span at 84 to 98 shows a compositional bias: low complexity; the sequence is INNNQSINTDDNNQI. The span at 99–119 shows a compositional bias: basic and acidic residues; sequence IKKEETNNYDGIEKRSEDRTE. Residues 120-140 show a composition bias toward polar residues; it reads STTNVDENEATFLQKTPQDNT. Positions 141–151 are enriched in basic and acidic residues; that stretch reads HLTEEEVKESS. A compositionally biased stretch (polar residues) spans 160–170; that stretch reads IDTAQQPSHTT. Residues 195–220 are compositionally biased toward basic and acidic residues; sequence KIKESNTESGKEENTIEQPNKVKEDS. 4 residues coordinate Ca(2+): glutamate 294, serine 299, valine 302, and glutamate 309. Residues 579–590 form an interaction with human fibrinogen region; that stretch reads YDNTIAFSTSSG. CNA-B domains follow at residues 600–713 and 714–824; these read KTYK…YQTP and KYSL…YDDE. The disordered stretch occupies residues 780–1068; sequence KPSGMTQTTT…NEDYGSKGTL (289 aa). Residues 791-801 show a composition bias toward acidic residues; that stretch reads SGDDDEQDADG. Over residues 802–814 the composition is skewed to basic and acidic residues; that stretch reads EEVHVTITDHDDF. Acidic residues predominate over residues 820–1039; it reads YYDDESDSDS…DSDSDSDNDS (220 aa). Residues 1053-1057 carry the LPXTG sorting signal motif; that stretch reads LPDTG. A Pentaglycyl murein peptidoglycan amidated threonine modification is found at threonine 1056. The propeptide at 1057 to 1092 is removed by sortase; the sequence is GANEDYGSKGTLLGTLFAGLGALLLGKRRKNRKNKN.

It belongs to the serine-aspartate repeat-containing protein (SDr) family.

Its subcellular location is the secreted. It is found in the cell wall. In terms of biological role, promotes bacterial attachment to both soluble and immobilized forms of fibrinogen in a dose-dependent manner. This binding occurs through the beta-chain of human fibrinogen. Could contribute to the initiation of foreign-body infection by allowing bacteria to adhere to biomaterial surfaces that have become coated with host proteins after implantation. Is important in the pathogenesis of central venous catheter (CVC)-associated infection model. This is Fibrinogen-binding protein (fbe) from Staphylococcus epidermidis.